A 216-amino-acid polypeptide reads, in one-letter code: Ras-related protein Rab-2B (216 aa).

GDP contacts are provided by Gly16, Val17, Gly18, Lys19, Ser20, and Cys21. The GTP site is built by Gly16, Val17, Gly18, Lys19, Ser20, Cys21, and Thr38. Residue Ser20 coordinates Mg(2+). A Switch 1 motif is present at residues Leu37–Glu42. Thr38 and Asp61 together coordinate Mg(2+). Residues Ala63–Thr72 carry the Switch 2 motif. Positions 64, 119, 120, 122, 150, and 151 each coordinate GTP. Asn119 lines the GDP pocket. GDP is bound by residues Asp122, Ala150, and Lys151. Residues Pro189–Cys216 form a disordered region. Ser202 is subject to Phosphoserine. Residues Cys215 and Cys216 are each lipidated (S-geranylgeranyl cysteine).

This sequence belongs to the small GTPase superfamily. Rab family. In terms of assembly, interacts (in GTP-bound form) with GARIN4 (via N-terminus). Interacts (in GTP-bound form) with GARIN5A. Interacts (in GTP-bound form) with GARIN1B. Interacts with VPS39 and VPS41. Requires Mg(2+) as cofactor. Expressed in kidney, prostate, lung, liver, thymus, colon, pancreas, and skeletal muscle, and low levels in placenta. Not detected in heart, brain, spleen, testis, ovary, small intestine and leukocyte.

It is found in the cell membrane. The protein localises to the endoplasmic reticulum membrane. Its subcellular location is the golgi apparatus membrane. It localises to the cytoplasmic vesicle. The protein resides in the secretory vesicle. It is found in the acrosome. The protein localises to the autophagosome membrane. It carries out the reaction GTP + H2O = GDP + phosphate + H(+). Its activity is regulated as follows. Regulated by guanine nucleotide exchange factors (GEFs) which promote the exchange of bound GDP for free GTP, GTPase activating proteins (GAPs) which increase the GTP hydrolysis activity, and GDP dissociation inhibitors (GDIs) which inhibit the dissociation of the nucleotide from the GTPase. In terms of biological role, the small GTPases Rab are key regulators of intracellular membrane trafficking, from the formation of transport vesicles to their fusion with membranes. Rabs cycle between active GTP-bound and inactive GDP-bound states. In their active state, drive transport of vesicular carriers from donor organelles to acceptor organelles to regulate the membrane traffic that maintains organelle identity and morphology. Regulates the compacted morphology of the Golgi. Promotes cytosolic DNA-induced innate immune responses. Regulates IFN responses against DNA viruses by regulating the CGAS-STING signaling axis. Together with RAB2A redundantly required for efficient autophagic flux. The sequence is that of Ras-related protein Rab-2B from Homo sapiens (Human).